The following is a 139-amino-acid chain: MGCNSLSMIKVRLQNLFDNDEVALLKITCYTDKLILLTNALAKAAIHTIKLNGIVFIHVITSSEVCPDNNIVVKSNFTTMPILQNGGYIWELIELTHCSQLNGLMDDNCEIKFSKRLSDSVMTNYMNQISDLLGLDLNS.

The DLNP; interaction with MAP1B signature appears at 136–139 (DLNS).

Belongs to the pneumovirus non-structural protein 1 family. Monomer. Homomultimer. Heteromultimer with NS2. Interacts with the matrix protein M. Interacts with host ELOC and CUL2; this interaction allows NS1 to form an active E3 ligase with ELOC and CUL2. Interacts with host IRF3; this interaction leads to the disrupted association of IRF3 with CREBBP and thus reduced binding of IRF3 to the IFN-beta promoter. Interacts with host MAVS; this interaction prevents MAVS binding to RIGI and inhibits signaling pathway leading to interferon production. Interacts with host MAP1B/microtubule-associated protein 1B. Interacts with host TRIM25 (via SPRY domain); this interaction suppresses RIGI ubiquitination and results in decreased interaction between RIGI and MAVS.

It is found in the host cytoplasm. The protein localises to the host mitochondrion. The protein resides in the host nucleus. Its function is as follows. Plays a major role in antagonizing the type I IFN-mediated antiviral response by degrading or inhibiting multiple cellular factors required for either IFN induction or response pathways. Acts cooperatively with NS2 to repress activation and nuclear translocation of host IFN-regulatory factor IRF3. Also disrupts the association of IRF3 with CREBBP. Interacts with host mitochondrial-associated membrane (MAM) MAVS and prevents the interaction with RIGI. Interacts with TRIM25 to suppress TRIM25-mediated RIGI ubiquitination and thereby RIGI-MAVS interaction. Together with NS2, participates in the proteasomal degradation of host STAT2, IRF3, IRF7, TBK1 and RIGI through a NS-degradasome involving CUL2 and Elongin-C. The degradasome requires an intact mitochondrial MAVS. Decreases the levels of host TRAF3 and IKBKE/IKK-epsilon. As functions other than disruptions of the type I IFN-mediated antiviral signaling pathways, induces host SOCS1 and SOCS3 expression. Suppresses premature apoptosis by an NF-kappa-B-dependent, interferon-independent mechanism and thus facilitates virus growth. Additionally, NS1 may serve some inhibitory role in viral transcription and RNA replication. Suppresses proliferation and activation of host CD103+ CD8+ cytotoxic T-lymphocytes and Th17 helper T-lymphocytes. The polypeptide is Non-structural protein 1 (1C) (Homo sapiens (Human)).